The following is a 470-amino-acid chain: Neuraminidase (470 aa).

The Intravirion segment spans residues 1–14 (MNPNQKIITIGSIS). The tract at residues 11 to 32 (GSISLGLVVFNVLLHVVSIIVT) is involved in apical transport and lipid raft association. A helical membrane pass occupies residues 15 to 35 (LGLVVFNVLLHVVSIIVTVLI). Positions 32-86 (TVLILGRGGNNGICNETVVREYNETVRIEKVTQWHNTSVVEYMPYWNEGTYMNNT) are hypervariable stalk region. The Virion surface portion of the chain corresponds to 36–470 (LGRGGNNGIC…AILPFDIDKM (435 aa)). 4 N-linked (GlcNAc...) asparagine; by host glycosylation sites follow: Asn46, Asn54, Asn67, and Asn84. The head of neuraminidase stretch occupies residues 89-470 (ICDVKGFAPF…AILPFDIDKM (382 aa)). Intrachain disulfides connect Cys90–Cys417, Cys122–Cys127, Cys182–Cys229, Cys231–Cys236, Cys277–Cys290, Cys279–Cys288, Cys316–Cys335, and Cys421–Cys446. Arg116 is a substrate binding site. Asn144 carries an N-linked (GlcNAc...) asparagine; by host glycan. Asp149 acts as the Proton donor/acceptor in catalysis. Arg150 provides a ligand contact to substrate. Position 275–276 (275–276 (EE)) interacts with substrate. Arg291 contacts substrate. Asp292 is a binding site for Ca(2+). Asn293 carries N-linked (GlcNAc...) asparagine; by host glycosylation. Residues Gly296 and Asp322 each coordinate Ca(2+). Arg368 is a binding site for substrate. N-linked (GlcNAc...) asparagine; by host glycosylation occurs at Asn398. Catalysis depends on Tyr402, which acts as the Nucleophile.

The protein belongs to the glycosyl hydrolase 34 family. Homotetramer. The cofactor is Ca(2+). N-glycosylated.

The protein resides in the virion membrane. The protein localises to the host apical cell membrane. It catalyses the reaction Hydrolysis of alpha-(2-&gt;3)-, alpha-(2-&gt;6)-, alpha-(2-&gt;8)- glycosidic linkages of terminal sialic acid residues in oligosaccharides, glycoproteins, glycolipids, colominic acid and synthetic substrates.. Its activity is regulated as follows. Inhibited by the neuraminidase inhibitors zanamivir (Relenza) and oseltamivir (Tamiflu). These drugs interfere with the release of progeny virus from infected cells and are effective against all influenza strains. Resistance to neuraminidase inhibitors is quite rare. Its function is as follows. Catalyzes the removal of terminal sialic acid residues from viral and cellular glycoconjugates. Cleaves off the terminal sialic acids on the glycosylated HA during virus budding to facilitate virus release. Additionally helps virus spread through the circulation by further removing sialic acids from the cell surface. These cleavages prevent self-aggregation and ensure the efficient spread of the progeny virus from cell to cell. Otherwise, infection would be limited to one round of replication. Described as a receptor-destroying enzyme because it cleaves a terminal sialic acid from the cellular receptors. May facilitate viral invasion of the upper airways by cleaving the sialic acid moieties on the mucin of the airway epithelial cells. Likely to plays a role in the budding process through its association with lipid rafts during intracellular transport. May additionally display a raft-association independent effect on budding. Plays a role in the determination of host range restriction on replication and virulence. Sialidase activity in late endosome/lysosome traffic seems to enhance virus replication. This Aves (Horse) protein is Neuraminidase.